The sequence spans 222 residues: Eukaryotic translation initiation factor 3 subunit K (222 aa).

In terms of domain architecture, PCI spans 46–208 (YDLEANLAVL…KIKTKNITEK (163 aa)).

The protein belongs to the eIF-3 subunit K family. Component of the eukaryotic translation initiation factor 3 (eIF-3) complex. The eIF-3 complex interacts with pix.

It localises to the cytoplasm. In terms of biological role, component of the eukaryotic translation initiation factor 3 (eIF-3) complex, which is involved in protein synthesis of a specialized repertoire of mRNAs and, together with other initiation factors, stimulates binding of mRNA and methionyl-tRNAi to the 40S ribosome. The eIF-3 complex specifically targets and initiates translation of a subset of mRNAs involved in cell proliferation. This chain is Eukaryotic translation initiation factor 3 subunit K, found in Drosophila grimshawi (Hawaiian fruit fly).